We begin with the raw amino-acid sequence, 456 residues long: Bifunctional protein GlmU (456 aa).

The interval 1 to 229 is pyrophosphorylase; it reads MSNSAMSVVI…LSEVEGVNNR (229 aa). UDP-N-acetyl-alpha-D-glucosamine is bound by residues 11-14, Lys-25, Gln-76, 81-82, 103-105, Gly-140, Glu-154, Asn-169, and Asn-227; these read LAAG, GT, and YGD. Residue Asp-105 coordinates Mg(2+). Position 227 (Asn-227) interacts with Mg(2+). The tract at residues 230–250 is linker; that stretch reads LQLSRLERIYQAEQSEKLLLA. Residues 251-456 are N-acetyltransferase; it reads GVMLLDPARF…QGWQRPVKKK (206 aa). Residues Arg-333 and Lys-351 each contribute to the UDP-N-acetyl-alpha-D-glucosamine site. The active-site Proton acceptor is the His-363. Tyr-366 and Asn-377 together coordinate UDP-N-acetyl-alpha-D-glucosamine. Residues Ala-380, 386–387, Ser-405, Ala-423, and Arg-440 contribute to the acetyl-CoA site; that span reads NY.

This sequence in the N-terminal section; belongs to the N-acetylglucosamine-1-phosphate uridyltransferase family. The protein in the C-terminal section; belongs to the transferase hexapeptide repeat family. In terms of assembly, homotrimer. The cofactor is Mg(2+).

The protein localises to the cytoplasm. It catalyses the reaction alpha-D-glucosamine 1-phosphate + acetyl-CoA = N-acetyl-alpha-D-glucosamine 1-phosphate + CoA + H(+). The catalysed reaction is N-acetyl-alpha-D-glucosamine 1-phosphate + UTP + H(+) = UDP-N-acetyl-alpha-D-glucosamine + diphosphate. The protein operates within nucleotide-sugar biosynthesis; UDP-N-acetyl-alpha-D-glucosamine biosynthesis; N-acetyl-alpha-D-glucosamine 1-phosphate from alpha-D-glucosamine 6-phosphate (route II): step 2/2. Its pathway is nucleotide-sugar biosynthesis; UDP-N-acetyl-alpha-D-glucosamine biosynthesis; UDP-N-acetyl-alpha-D-glucosamine from N-acetyl-alpha-D-glucosamine 1-phosphate: step 1/1. It participates in bacterial outer membrane biogenesis; LPS lipid A biosynthesis. Catalyzes the last two sequential reactions in the de novo biosynthetic pathway for UDP-N-acetylglucosamine (UDP-GlcNAc). The C-terminal domain catalyzes the transfer of acetyl group from acetyl coenzyme A to glucosamine-1-phosphate (GlcN-1-P) to produce N-acetylglucosamine-1-phosphate (GlcNAc-1-P), which is converted into UDP-GlcNAc by the transfer of uridine 5-monophosphate (from uridine 5-triphosphate), a reaction catalyzed by the N-terminal domain. In Serratia proteamaculans (strain 568), this protein is Bifunctional protein GlmU.